Here is a 668-residue protein sequence, read N- to C-terminus: UvrABC system protein B (668 aa).

The Helicase ATP-binding domain occupies 31–416 (QGITDGVPAQ…RGHIIEQIIR (386 aa)). 44-51 (GTTGSGKT) is an ATP binding site. The Beta-hairpin motif lies at 97–120 (YYDYYQPEAYIARSDTYIEKSLLI). Residues 433–596 (QIDDLLEEIR…ITPQPIIKPI (164 aa)) form the Helicase C-terminal domain. The UVR domain occupies 621–656 (EASIKTYEEAMYQAAQEFQFDEAAKYRDLMNAAKKQ).

The protein belongs to the UvrB family. In terms of assembly, forms a heterotetramer with UvrA during the search for lesions. Interacts with UvrC in an incision complex.

Its subcellular location is the cytoplasm. In terms of biological role, the UvrABC repair system catalyzes the recognition and processing of DNA lesions. A damage recognition complex composed of 2 UvrA and 2 UvrB subunits scans DNA for abnormalities. Upon binding of the UvrA(2)B(2) complex to a putative damaged site, the DNA wraps around one UvrB monomer. DNA wrap is dependent on ATP binding by UvrB and probably causes local melting of the DNA helix, facilitating insertion of UvrB beta-hairpin between the DNA strands. Then UvrB probes one DNA strand for the presence of a lesion. If a lesion is found the UvrA subunits dissociate and the UvrB-DNA preincision complex is formed. This complex is subsequently bound by UvrC and the second UvrB is released. If no lesion is found, the DNA wraps around the other UvrB subunit that will check the other stand for damage. This Chlamydia trachomatis serovar D (strain ATCC VR-885 / DSM 19411 / UW-3/Cx) protein is UvrABC system protein B.